We begin with the raw amino-acid sequence, 600 residues long: tRNA(Ile)-lysidine synthase, chloroplastic (600 aa).

Ser-35 to Ser-40 is a binding site for ATP.

Belongs to the tRNA(Ile)-lysidine synthase family.

It is found in the plastid. Its subcellular location is the chloroplast. The enzyme catalyses cytidine(34) in tRNA(Ile2) + L-lysine + ATP = lysidine(34) in tRNA(Ile2) + AMP + diphosphate + H(+). Its function is as follows. Ligates lysine onto the cytidine present at position 34 of the AUA codon-specific tRNA(Ile) that contains the anticodon CAU, in an ATP-dependent manner. Cytidine is converted to lysidine, thus changing the amino acid specificity of the tRNA from methionine to isoleucine. The sequence is that of tRNA(Ile)-lysidine synthase, chloroplastic from Tupiella akineta (Green alga).